Reading from the N-terminus, the 81-residue chain is Sulfur carrier protein TusA (81 aa).

Catalysis depends on cysteine 19, which acts as the Cysteine persulfide intermediate.

It belongs to the sulfur carrier protein TusA family. Interacts with IscS.

The protein resides in the cytoplasm. It functions in the pathway tRNA modification. Functionally, sulfur carrier protein involved in sulfur trafficking in the cell. Part of a sulfur-relay system required for 2-thiolation during synthesis of 2-thiouridine of the modified wobble base 5-methylaminomethyl-2-thiouridine (mnm(5)s(2)U) in tRNA. Interacts with IscS and stimulates its cysteine desulfurase activity. Accepts an activated sulfur from IscS, which is then transferred to TusD, and thus determines the direction of sulfur flow from IscS to 2-thiouridine formation. Also appears to be involved in sulfur transfer for the biosynthesis of molybdopterin. This is Sulfur carrier protein TusA from Serratia proteamaculans (strain 568).